Here is a 371-residue protein sequence, read N- to C-terminus: Cytochrome b (371 aa).

4 helical membrane passes run 25–45, 69–90, 105–125, and 170–190; these read FGSM…FLAV, WMVQ…YIHI, WLSG…GYVL, and FFAL…LHVL. 2 residues coordinate heme b: His-75 and His-89. 2 residues coordinate heme b: His-174 and His-188. His-193 lines the a ubiquinone pocket. The next 4 membrane-spanning stretches (helical) occupy residues 218-238, 280-300, 312-332, and 339-358; these read MKDL…ISFF, LGGA…PFIH, LMQL…WAAT, and FISI…ISNP.

The protein belongs to the cytochrome b family. The cytochrome bc1 complex contains 3 respiratory subunits (MT-CYB, CYC1 and UQCRFS1), 2 core proteins (UQCRC1 and UQCRC2) and probably 6 low-molecular weight proteins. It depends on heme b as a cofactor.

The protein resides in the mitochondrion inner membrane. Its function is as follows. Component of the ubiquinol-cytochrome c reductase complex (complex III or cytochrome b-c1 complex) that is part of the mitochondrial respiratory chain. The b-c1 complex mediates electron transfer from ubiquinol to cytochrome c. Contributes to the generation of a proton gradient across the mitochondrial membrane that is then used for ATP synthesis. The sequence is that of Cytochrome b (MT-CYB) from Boa constrictor (Boa).